The chain runs to 1785 residues: BCL-6 corepressor-like protein 1 (1785 aa).

Disordered regions lie at residues 65-101, 113-137, and 343-368; these read VGSG…KMDY, VPLS…NSRA, and ASTP…GPPS. Over residues 83-97 the composition is skewed to basic and acidic residues; the sequence is KLGHKSEDKPDDPQP. Residue Ser-496 is modified to Phosphoserine. Polar residues-rich tracts occupy residues 527–539 and 586–600; these read PCTS…TTQP and GTEQ…TFSP. Disordered stretches follow at residues 527-550 and 562-646; these read PCTS…PLAD and PTPQ…PMPV. Phosphoserine occurs at positions 599 and 613. A Glycyl lysine isopeptide (Lys-Gly) (interchain with G-Cter in SUMO2) cross-link involves residue Lys-747. Disordered regions lie at residues 753 to 781, 876 to 901, and 937 to 977; these read IIDQ…QPST, SSSE…EQDP, and VQPS…LKLA. Ser-1029 and Ser-1033 each carry phosphoserine. Lys-1092 is covalently cross-linked (Glycyl lysine isopeptide (Lys-Gly) (interchain with G-Cter in SUMO2)). Disordered regions lie at residues 1107 to 1293 and 1312 to 1487; these read PDDV…QGRR and WDTN…PEAR. Ser-1162 carries the phosphoserine modification. Positions 1176–1185 are enriched in basic residues; sequence VRGKHKHRKP. Residues 1195 to 1213 are compositionally biased toward basic and acidic residues; it reads KRADSHEEGSLEKKAKSSF. The span at 1222 to 1234 shows a compositional bias: polar residues; that stretch reads STRTRSQSGSICS. Residues 1271–1284 show a composition bias toward basic and acidic residues; sequence TQRDTQYRSHHAQD. Over residues 1314–1324 the composition is skewed to acidic residues; the sequence is TNEEEEEEEEE. The short motif at 1328–1336 is the Nuclear localization signal element; it reads KRKKRRRQK. Over residues 1328-1339 the composition is skewed to basic residues; sequence KRKKRRRQKSRK. Residues 1352–1363 show a composition bias toward basic and acidic residues; that stretch reads EQRRKGRADLKA. Residues 1440–1449 are compositionally biased toward polar residues; that stretch reads WSQQKTRSPK. Residues 1461–1480 show a composition bias toward low complexity; the sequence is TPSKSRSASSEEASESPTAR. Ser-1476 carries the post-translational modification Phosphoserine. 3 ANK repeats span residues 1529-1558, 1562-1591, and 1595-1623; these read AGYT…NVNC, DGTR…DPTL, and SGQT…QGRA. Residues 1668–1785 form a PCGF Ub-like fold domain (PUFD); required for the interaction with the KDM2B-SKP1 heterodimeric complex region; the sequence is DDFMFELSDK…SEVEFQSCNS (118 aa).

This sequence belongs to the BCOR family. In terms of assembly, interacts with PCGF1, forming heterodimers. The PCGF1-BCORL1 heterodimeric complex interacts with the KDM2B-SKP1 heterodimeric complex to form a homotetrameric polycomb repression complex 1 (PRC1.1). Interacts with SKP1. Interacts with CTBP1, HDAC4, HDAC5 and HDAC7. As to expression, detected in testis and prostate. Detected at lower levels in peripheral blood leukocytes and spleen. Mainly expressed in the spermatogonia and primary spermatocytes.

The protein resides in the nucleus. Its function is as follows. Transcriptional corepressor. May specifically inhibit gene expression when recruited to promoter regions by sequence-specific DNA-binding proteins such as BCL6. This repression may be mediated at least in part by histone deacetylase activities which can associate with this corepressor. The chain is BCL-6 corepressor-like protein 1 from Homo sapiens (Human).